Consider the following 212-residue polypeptide: Ribonuclease HII (212 aa).

Residues 28-212 (SLIAGIDEVG…KSFAPVRQVF (185 aa)) form the RNase H type-2 domain. Positions 34, 35, and 127 each coordinate a divalent metal cation.

It belongs to the RNase HII family. Requires Mn(2+) as cofactor. The cofactor is Mg(2+).

It localises to the cytoplasm. The enzyme catalyses Endonucleolytic cleavage to 5'-phosphomonoester.. Its function is as follows. Endonuclease that specifically degrades the RNA of RNA-DNA hybrids. This is Ribonuclease HII from Chlamydia abortus (strain DSM 27085 / S26/3) (Chlamydophila abortus).